An 87-amino-acid chain; its full sequence is Mu-conotoxin cal12b (87 aa).

Positions 1–19 (MKLTCVLVVLLLLLPYGDL) are cleaved as a signal peptide. The propeptide occupies 20–42 (ITNNYIRGAARKVTPWRRNLKTR). Disulfide bonds link Cys-45-Cys-58, Cys-53-Cys-70, Cys-60-Cys-75, and Cys-69-Cys-81. The residue at position 59 (Trp-59) is a 6'-bromotryptophan. Pro-65 bears the 4-hydroxyproline mark. Residues Trp-79 and Trp-80 each carry the 6'-bromotryptophan modification. Pro-82 carries the 4-hydroxyproline modification. Trp-86 carries the 6'-bromotryptophan modification.

Expressed by the venom duct.

The protein localises to the secreted. In terms of biological role, mu-conotoxins block voltage-gated sodium channels. This toxin reversibly blocks voltage-gated sodium channel in cephalopods (tested on squid giant-fiber-lobe neurons) with an inhibitor constant (Ki) of 15 nmol/l, with no alteration in the voltage dependence of sodium conductance or on the kinetics of inactivation. Has no effect on sodium channels of the two gastropod S.luhuanus and A.californica (which are not natural prey). This Californiconus californicus (California cone) protein is Mu-conotoxin cal12b.